We begin with the raw amino-acid sequence, 306 residues long: Palmitoyl-protein thioesterase 1 (306 aa).

The signal sequence occupies residues methionine 1 to leucine 27. Cystine bridges form between cysteine 45/cysteine 46, cysteine 96/cysteine 128, and cysteine 152/cysteine 160. The active site involves serine 115. N-linked (GlcNAc...) asparagine glycans are attached at residues asparagine 197, asparagine 212, and asparagine 232. Catalysis depends on residues aspartate 233 and histidine 289.

This sequence belongs to the palmitoyl-protein thioesterase family. Interacts with CLN5, ATP5F1A and ATP5F1B. In terms of processing, glycosylated. In terms of tissue distribution, spleen, brain, seminal vesicle, and testis. Lower levels of activity in liver, heart, lung, and skeletal muscle.

The protein localises to the lysosome. It is found in the secreted. The protein resides in the golgi apparatus. It localises to the endoplasmic reticulum. The catalysed reaction is S-hexadecanoyl-L-cysteinyl-[protein] + H2O = L-cysteinyl-[protein] + hexadecanoate + H(+). It catalyses the reaction hexadecanoyl-CoA + H2O = hexadecanoate + CoA + H(+). It carries out the reaction S-hexadecanoyl-N-acetylcysteamine + H2O = N-acetylcysteamine + hexadecanoate + H(+). The enzyme catalyses S-hexadecanoyl-N-acetylcysteine methyl ester + H2O = N-acetylcysteine methyl ester + hexadecanoate + H(+). With respect to regulation, palmitoylation reduces PPT1 enzymatic activity. Has thioesterase activity against fatty acid thioesters with 14 -18 carbons, including palmitoyl-CoA, S-palmitoyl-N-acetylcysteamine, and palmitoylated proteins. In contrast to PPT2, PPT1 can hydrolyze palmitoylated proteins and palmitoylcysteine. The protein is Palmitoyl-protein thioesterase 1 (PPT1) of Bos taurus (Bovine).